A 401-amino-acid chain; its full sequence is Methionine import ATP-binding protein MetN (401 aa).

Residues 6-248 (ITFDHVVKEF…PQQPVTKRFI (243 aa)) enclose the ABC transporter domain. 45 to 52 (GYSGAGKS) serves as a coordination point for ATP.

Belongs to the ABC transporter superfamily. Methionine importer (TC 3.A.1.24) family. In terms of assembly, the complex is composed of two ATP-binding proteins (MetN), two transmembrane proteins (MetI) and a solute-binding protein (MetQ).

The protein localises to the cell membrane. The catalysed reaction is L-methionine(out) + ATP + H2O = L-methionine(in) + ADP + phosphate + H(+). The enzyme catalyses D-methionine(out) + ATP + H2O = D-methionine(in) + ADP + phosphate + H(+). Its function is as follows. Part of the ABC transporter complex MetNIQ involved in methionine import. Responsible for energy coupling to the transport system. The protein is Methionine import ATP-binding protein MetN of Bifidobacterium longum (strain NCC 2705).